A 900-amino-acid chain; its full sequence is Sterol regulatory element-binding protein 1 (900 aa).

Over residues 1–16 the composition is skewed to low complexity; the sequence is MQSSIPSVSVSVASPA. Disordered stretches follow at residues 1–49 and 206–263; these read MQSS…TKAS and TTCK…PKKT. A nuclear form of sre1; complements deletions of sre1 or scp1 region spans residues 1–440; it reads MQSSIPSVSV…FALPPFLMSP (440 aa). Over 1 to 442 the chain is Cytoplasmic; it reads MQSSIPSVSV…LPPFLMSPFT (442 aa). The segment covering 21–32 has biased composition (polar residues); sequence TKASPDSKSPNS. The span at 35–49 shows a compositional bias: low complexity; that stretch reads AIPSSSPLASSTKAS. The 73-residue stretch at 260–332 folds into the bHLH domain; the sequence is PKKTAHNMIE…AKATEYIRHL (73 aa). A helical membrane pass occupies residues 443-463; sequence GTVLFNMLKIGVVLLGLFYLL. The Lumenal segment spans residues 464–509; sequence HDNSLFKGFKGEKKSKVSTRSSMSPSSILFRKTVFEKYCLLDHSTS. The chain crosses the membrane as a helical span at residues 510–530; that stretch reads TISLFFGLLIFTLKSAYGYLT. The Cytoplasmic segment spans residues 531–900; that stretch reads HRLSALYTSS…QEDLGYVSSA (370 aa). 2 positions are modified to phosphoserine: Ser-898 and Ser-899.

In terms of assembly, forms a tight complex with scp1, composed of 4 copies of scp1 and 4 copies of sre1, which protects sre1 precursor from degradation by the proteasome. In low oxygen or sterol conditions, undergoes proteolytic cleavage by rhomboid-type protease rbd2 and is released as soluble transcription factor from the membrane. In terms of processing, processed form is phosphorylated.

The protein localises to the endoplasmic reticulum membrane. It localises to the nucleus. In terms of biological role, precursor of the transcription factor form (Processed sterol regulatory element-binding protein 1), which is embedded in the endoplasmic reticulum membrane. Low oxygen or sterol conditions promote processing of this form, releasing the transcription factor form that translocates into the nucleus and activates transcription of genes required for adaptation to anaerobic growth. Its function is as follows. Transcriptional activator required for transcription of genes required for adaptation to anaerobic growth like those implicated in the nonrespiratory oxygen-consumptive biosynthetic pathways of sterol, heme, sphingolipid, and ubiquinone biosynthesis. May monitor oxygen levels through sterol synthesis steps which require oxygen. This is Sterol regulatory element-binding protein 1 from Schizosaccharomyces pombe (strain 972 / ATCC 24843) (Fission yeast).